An 826-amino-acid chain; its full sequence is Ribonucleoside-diphosphate reductase large subunit (826 aa).

Substrate contacts are provided by residues Thr171, 186-187 (SC), Gly217, 387-391 (NLCAE), and 594-598 (PTSGC). Cysteines 187 and 403 form a disulfide. Catalysis depends on Asn387, which acts as the Proton acceptor. Residue Cys389 is the Cysteine radical intermediate of the active site. Glu391 serves as the catalytic Proton acceptor.

Belongs to the ribonucleoside diphosphate reductase large chain family. As to quaternary structure, heterotetramer composed of a homodimer of the large subunit (R1) and a homodimer of the small subunit (R2). Larger multisubunit protein complex are also active, composed of (R1)n(R2)n.

It catalyses the reaction a 2'-deoxyribonucleoside 5'-diphosphate + [thioredoxin]-disulfide + H2O = a ribonucleoside 5'-diphosphate + [thioredoxin]-dithiol. Ribonucleoside-diphosphate reductase holoenzyme provides the precursors necessary for viral DNA synthesis. Allows virus growth in non-dividing cells, as well as reactivation from latency in infected hosts. Catalyzes the biosynthesis of deoxyribonucleotides from the corresponding ribonucleotides. The chain is Ribonucleoside-diphosphate reductase large subunit from Epstein-Barr virus (strain GD1) (HHV-4).